Here is a 378-residue protein sequence, read N- to C-terminus: Cytochrome b (378 aa).

A run of 4 helical transmembrane segments spans residues 33–53, 77–98, 113–133, and 178–198; these read FGSLLGLCLVAQILTGLFLAM, WLIRNLHANGASFFFLCLYLHI, WNTGILLLLLIMVTAFVGYVL, and FFAFHFFIPFIATAVVALHFL. Heme b is bound by residues His-83 and His-97. Positions 182 and 196 each coordinate heme b. His-201 lines the a ubiquinone pocket. 4 helical membrane-spanning segments follow: residues 226–246, 288–308, 320–340, and 347–367; these read YKDLLGFLLLLAPLTALAVFS, LGGVLALLASILVLAVVPFLH, WSQLCLFTLVVTVLILTWIGG, and LTTVGQIASLLYFTIILFLMP.

The protein belongs to the cytochrome b family. In terms of assembly, the cytochrome bc1 complex contains 3 respiratory subunits (MT-CYB, CYC1 and UQCRFS1), 2 core proteins (UQCRC1 and UQCRC2) and probably 6 low-molecular weight proteins. Heme b is required as a cofactor.

The protein resides in the mitochondrion inner membrane. Its function is as follows. Component of the ubiquinol-cytochrome c reductase complex (complex III or cytochrome b-c1 complex) that is part of the mitochondrial respiratory chain. The b-c1 complex mediates electron transfer from ubiquinol to cytochrome c. Contributes to the generation of a proton gradient across the mitochondrial membrane that is then used for ATP synthesis. This is Cytochrome b (mt-cyb) from Indostomus paradoxus (Armoured stickleback).